We begin with the raw amino-acid sequence, 575 residues long: Sulfite reductase [NADPH] hemoprotein beta-component (575 aa).

Residues C439, C445, C484, and C488 each coordinate [4Fe-4S] cluster. Siroheme is bound at residue C488.

This sequence belongs to the nitrite and sulfite reductase 4Fe-4S domain family. Alpha(8)-beta(8). The alpha component is a flavoprotein, the beta component is a hemoprotein. Siroheme is required as a cofactor. The cofactor is [4Fe-4S] cluster.

It catalyses the reaction hydrogen sulfide + 3 NADP(+) + 3 H2O = sulfite + 3 NADPH + 4 H(+). It participates in sulfur metabolism; hydrogen sulfide biosynthesis; hydrogen sulfide from sulfite (NADPH route): step 1/1. Its function is as follows. Component of the sulfite reductase complex that catalyzes the 6-electron reduction of sulfite to sulfide. This is one of several activities required for the biosynthesis of L-cysteine from sulfate. This Blochmanniella pennsylvanica (strain BPEN) protein is Sulfite reductase [NADPH] hemoprotein beta-component.